Consider the following 67-residue polypeptide: Large ribosomal subunit protein uL29 (67 aa).

It belongs to the universal ribosomal protein uL29 family.

In Agathobacter rectalis (strain ATCC 33656 / DSM 3377 / JCM 17463 / KCTC 5835 / VPI 0990) (Eubacterium rectale), this protein is Large ribosomal subunit protein uL29.